A 389-amino-acid chain; its full sequence is MTSAAPAAAQFAAPAPAAMGIYDRRHHPLAAGVWGDHPFIRPDTTASTSNAAAAAMVVAPPPLTEPKFESQLALPLQHGDDQDNAAALQESPRHASDSFEQEASKPRDKIQRRLAQNREAARKSRLRKKAYIQNLETSRMKLAHLEQEITRARQQSAYINRSSNPATLPAPIDSGVVTFEVEYAQWVEEQGRQTAELRASLQAAAEGPELRAVVEAALAHYDRLFAAKREAARRDVFFVMSGVWRTGAERFFLWIAGFRPSEVIRVLAPQLEPMTERQAADVQGLQQKARHLEDALSQGMDKLKQTLADSLLAEAVVVSTSCDASPPPPPPEEEEPSSSAAGDGGCYMAQMGSAMGRLSNLVAFVDHVRHRRSPPPTSHLHVRRRAELG.

The segment at 80–110 (DDQDNAAALQESPRHASDSFEQEASKPRDKI) is disordered. Over residues 91–110 (SPRHASDSFEQEASKPRDKI) the composition is skewed to basic and acidic residues. The bZIP domain maps to 107 to 151 (RDKIQRRLAQNREAARKSRLRKKAYIQNLETSRMKLAHLEQEITR). The segment at 109 to 129 (KIQRRLAQNREAARKSRLRKK) is basic motif. Positions 135 to 149 (LETSRMKLAHLEQEI) are leucine-zipper. The region spanning 176–389 (VVTFEVEYAQ…LHVRRRAELG (214 aa)) is the DOG1 domain. 2 disordered regions span residues 320 to 345 (TSCD…GDGG) and 370 to 389 (HRRS…AELG). The segment covering 380 to 389 (LHVRRRAELG) has biased composition (basic residues).

It belongs to the bZIP family.

It is found in the nucleus. Transcriptional regulator involved in defense response. This is Transcription factor TGAL10 from Oryza sativa subsp. japonica (Rice).